The chain runs to 224 residues: Adenylate kinase (224 aa).

10–15 (GSGKST) lines the ATP pocket. Residues 30-59 (SSGDMIRAEIEKGSELGKELKKYLAKGELI) are NMP. AMP-binding positions include Ser-31, Arg-36, 57-59 (ELI), 83-86 (GYPR), and Gln-90. The LID stretch occupies residues 124 to 161 (GRRICPKCGAVYHLRYRPPKVPGKCDLCGSQLIQREDD). Residue Arg-125 participates in ATP binding. Zn(2+) is bound by residues Cys-128 and Cys-131. An ATP-binding site is contributed by 134 to 135 (VY). Positions 148 and 151 each coordinate Zn(2+). The AMP site is built by Arg-158 and Arg-169. Gly-197 provides a ligand contact to ATP.

This sequence belongs to the adenylate kinase family. In terms of assembly, monomer.

Its subcellular location is the cytoplasm. The catalysed reaction is AMP + ATP = 2 ADP. It participates in purine metabolism; AMP biosynthesis via salvage pathway; AMP from ADP: step 1/1. Catalyzes the reversible transfer of the terminal phosphate group between ATP and AMP. Plays an important role in cellular energy homeostasis and in adenine nucleotide metabolism. This chain is Adenylate kinase, found in Thermococcus onnurineus (strain NA1).